A 101-amino-acid chain; its full sequence is Acylphosphatase (101 aa).

Residues 12–98 enclose the Acylphosphatase-like domain; that stretch reads RAHVFVTGRV…EGLRGFEVKR (87 aa). Catalysis depends on residues Arg-27 and Asn-45.

The protein belongs to the acylphosphatase family.

The enzyme catalyses an acyl phosphate + H2O = a carboxylate + phosphate + H(+). The sequence is that of Acylphosphatase (acyP) from Nostoc sp. (strain PCC 7120 / SAG 25.82 / UTEX 2576).